The following is a 35-amino-acid chain: Photosystem II reaction center protein T (35 aa).

The chain crosses the membrane as a helical span at residues 3 to 23 (ALVYTFLLVSTLGIIFFAIFF).

The protein belongs to the PsbT family. PSII is composed of 1 copy each of membrane proteins PsbA, PsbB, PsbC, PsbD, PsbE, PsbF, PsbH, PsbI, PsbJ, PsbK, PsbL, PsbM, PsbT, PsbY, PsbZ, Psb30/Ycf12, at least 3 peripheral proteins of the oxygen-evolving complex and a large number of cofactors. It forms dimeric complexes.

It is found in the plastid. The protein localises to the chloroplast thylakoid membrane. In terms of biological role, found at the monomer-monomer interface of the photosystem II (PS II) dimer, plays a role in assembly and dimerization of PSII. PSII is a light-driven water plastoquinone oxidoreductase, using light energy to abstract electrons from H(2)O, generating a proton gradient subsequently used for ATP formation. The protein is Photosystem II reaction center protein T of Amborella trichopoda.